Consider the following 377-residue polypeptide: CaM kinase-like vesicle-associated protein (377 aa).

The Protein kinase domain maps to 24–287; the sequence is YDLGQLIKTE…AADAISHEWI (264 aa). The disordered stretch occupies residues 324-377; sequence MKRLRAPEQTDPGTPSPSKDSDKTPSMATPAPSPANTPAEGAPSLPCPSPDTTG. The segment covering 347–362 has biased composition (low complexity); it reads TPSMATPAPSPANTPA. The span at 368–377 shows a compositional bias: pro residues; sequence LPCPSPDTTG.

The protein belongs to the protein kinase superfamily. CAMK Ser/Thr protein kinase family. Interacts with calmodulin, in the presence of calcium. Ca(2+) is required as a cofactor.

Its subcellular location is the cytoplasmic vesicle membrane. Its function is as follows. Does not appear to have detectable kinase activity. In Xenopus laevis (African clawed frog), this protein is CaM kinase-like vesicle-associated protein (camkv).